The sequence spans 421 residues: MNIFNNHLHETDKEIDEIIKHEKLRQNSVIELIASENFVSPAVLEAQGSILTNKYAEGYSGKRFYNGCEEVDKAENLAIERVKKLFNCKYANVQSHSGSQANQAVYLALLQPGDTILGMSLDSGGHLTHGAAPNMSGKWFNAVSYSVNKETYLIDYDEIERLADLHKPKLLIAGFSAYPRNIDFARFREIADKVGAYFMADIAHIAGLVATGEHQSPIPYTHAVTSTTHKTLRGPRGGLILSNDEEIGKKINSALFPGLQGGPLMHIIAAKAVAFLENLQPEYKSYIKQVISNAKALASSLQERGYDILTGGTDNHIVLVDLCKDGITGKLAANSLDRAGITCNKNAIPFDETSPFITSGIRLGTPACTTRGFKEKDFVLVGHMVADILDGLKNNEDNGKAEQKVLTEVTKLIKLFPFYTR.

(6S)-5,6,7,8-tetrahydrofolate-binding positions include Leu121 and 125 to 127 (GHL). Lys230 is modified (N6-(pyridoxal phosphate)lysine). (6S)-5,6,7,8-tetrahydrofolate-binding positions include Glu246 and 354-356 (SPF).

Belongs to the SHMT family. Homodimer. Pyridoxal 5'-phosphate is required as a cofactor.

The protein localises to the cytoplasm. The enzyme catalyses (6R)-5,10-methylene-5,6,7,8-tetrahydrofolate + glycine + H2O = (6S)-5,6,7,8-tetrahydrofolate + L-serine. It functions in the pathway one-carbon metabolism; tetrahydrofolate interconversion. Its pathway is amino-acid biosynthesis; glycine biosynthesis; glycine from L-serine: step 1/1. In terms of biological role, catalyzes the reversible interconversion of serine and glycine with tetrahydrofolate (THF) serving as the one-carbon carrier. This reaction serves as the major source of one-carbon groups required for the biosynthesis of purines, thymidylate, methionine, and other important biomolecules. Also exhibits THF-independent aldolase activity toward beta-hydroxyamino acids, producing glycine and aldehydes, via a retro-aldol mechanism. This chain is Serine hydroxymethyltransferase, found in Rickettsia felis (strain ATCC VR-1525 / URRWXCal2) (Rickettsia azadi).